Here is a 538-residue protein sequence, read N- to C-terminus: Nicotinate phosphoribosyltransferase (538 aa).

2 residues coordinate nicotinate: Tyr-21 and Thr-210. At His-213 the chain carries Phosphohistidine. Residue Arg-318 coordinates nicotinate. 5-phospho-alpha-D-ribose 1-diphosphate is bound at residue Thr-380.

The protein belongs to the NAPRTase family. Homodimer. The cofactor is Mg(2+). Mn(2+) is required as a cofactor. Post-translationally, transiently phosphorylated on a His residue during the reaction cycle. Phosphorylation strongly increases the affinity for substrates and increases the rate of nicotinate D-ribonucleotide production. Dephosphorylation regenerates the low-affinity form of the enzyme, leading to product release.

The protein localises to the cytoplasm. Its subcellular location is the cytosol. It carries out the reaction nicotinate + 5-phospho-alpha-D-ribose 1-diphosphate + ATP + H2O = nicotinate beta-D-ribonucleotide + ADP + phosphate + diphosphate. It participates in cofactor biosynthesis; NAD(+) biosynthesis; nicotinate D-ribonucleotide from nicotinate: step 1/1. Its function is as follows. Catalyzes the first step in the biosynthesis of NAD from nicotinic acid, the ATP-dependent synthesis of beta-nicotinate D-ribonucleotide from nicotinate and 5-phospho-D-ribose 1-phosphate. Helps prevent cellular oxidative stress via its role in NAD biosynthesis. The polypeptide is Nicotinate phosphoribosyltransferase (Naprt) (Rattus norvegicus (Rat)).